A 241-amino-acid polypeptide reads, in one-letter code: Small ribosomal subunit protein uS3 (241 aa).

Positions 39 to 108 constitute a KH type-2 domain; it reads IREGVLKLLK…NLKVEVKVIE (70 aa). The tract at residues 215 to 241 is disordered; sequence SQRVSEKAPMNNDRRFNNKNNNRGGRK. Residues 232 to 241 are compositionally biased toward low complexity; that stretch reads NKNNNRGGRK.

Belongs to the universal ribosomal protein uS3 family. Part of the 30S ribosomal subunit. Forms a tight complex with proteins S10 and S14.

Functionally, binds the lower part of the 30S subunit head. Binds mRNA in the 70S ribosome, positioning it for translation. This is Small ribosomal subunit protein uS3 from Mesoplasma florum (Acholeplasma florum).